Reading from the N-terminus, the 293-residue chain is Elongation factor Ts (293 aa).

An involved in Mg(2+) ion dislocation from EF-Tu region spans residues 80–83; it reads TDFV.

Belongs to the EF-Ts family.

Its subcellular location is the cytoplasm. In terms of biological role, associates with the EF-Tu.GDP complex and induces the exchange of GDP to GTP. It remains bound to the aminoacyl-tRNA.EF-Tu.GTP complex up to the GTP hydrolysis stage on the ribosome. This chain is Elongation factor Ts, found in Burkholderia cenocepacia (strain HI2424).